We begin with the raw amino-acid sequence, 1257 residues long: RAF-like serine/threonine-protein kinase 24 (1257 aa).

The tract at residues 1 to 21 (MDQAKGYEHVRYTAPDPRDEG) is disordered. Residues 191–277 (PRDQKLRYVG…EKPRMFLFSS (87 aa)) enclose the PB1 domain. Basic and acidic residues-rich tracts occupy residues 457-480 (VQDP…KVND) and 493-502 (KEPKMRRESS). 2 disordered regions span residues 457-629 (VQDP…RTSQ) and 761-789 (SQSE…VPQG). Position 474 is a phosphoserine (S474). Positions 533–548 (TQTSSSTPDPSSSTLS) are enriched in low complexity. The span at 550 to 576 (KSLRKSEDHVENNLSAKEPKMRKEHST) shows a compositional bias: basic and acidic residues. A Phosphoserine modification is found at S555. The segment covering 583–593 (SVSSVSSDSMV) has biased composition (low complexity). A compositionally biased stretch (polar residues) spans 769-782 (ETNTPEHVSQTETS). S777 bears the Phosphoserine mark. Residues 974-1239 (LEELKELGSG…PEIARRLRTM (266 aa)) form the Protein kinase domain. ATP-binding positions include 980–988 (LGSGTFGTV) and K1001. Position 1013 is a phosphoserine (S1013). D1102 acts as the Proton acceptor in catalysis.

This sequence belongs to the protein kinase superfamily. Ser/Thr protein kinase family. Post-translationally, hyperphosphorylated in response to auxin in an ABP1- and TMK1-dependent manner.

Its subcellular location is the cytoplasm. The enzyme catalyses L-seryl-[protein] + ATP = O-phospho-L-seryl-[protein] + ADP + H(+). It carries out the reaction L-threonyl-[protein] + ATP = O-phospho-L-threonyl-[protein] + ADP + H(+). With respect to regulation, activated by auxin via rapid phosphorylation downstream of ABP1 and TMK1 signaling. Its function is as follows. RAF-like protein kinase acting, together with RAF20, as a central mediator of a fast response pathway to auxin involving proteins phosphorylation, and leading to rapid cellular responses including membrane depolarization and cytoplasmic streaming. Required for general growth and developmental process. The protein is RAF-like serine/threonine-protein kinase 24 of Arabidopsis thaliana (Mouse-ear cress).